A 383-amino-acid polypeptide reads, in one-letter code: Acetylornithine deacetylase (383 aa).

Histidine 80 is a binding site for Zn(2+). Residue aspartate 82 is part of the active site. Residue aspartate 112 participates in Zn(2+) binding. Glutamate 144 is an active-site residue. Zn(2+)-binding residues include glutamate 145, glutamate 169, and histidine 355.

It belongs to the peptidase M20A family. ArgE subfamily. Homodimer. Zn(2+) serves as cofactor. Co(2+) is required as a cofactor. Requires glutathione as cofactor.

Its subcellular location is the cytoplasm. It carries out the reaction N(2)-acetyl-L-ornithine + H2O = L-ornithine + acetate. Its pathway is amino-acid biosynthesis; L-arginine biosynthesis; L-ornithine from N(2)-acetyl-L-ornithine (linear): step 1/1. In terms of biological role, catalyzes the hydrolysis of the amide bond of N(2)-acetylated L-amino acids. Cleaves the acetyl group from N-acetyl-L-ornithine to form L-ornithine, an intermediate in L-arginine biosynthesis pathway, and a branchpoint in the synthesis of polyamines. The chain is Acetylornithine deacetylase from Shigella flexneri.